Consider the following 328-residue polypeptide: Protein-glutamine deamidase Cif (328 aa).

The interval 1–68 (MLEHGVMKIP…TNRTGENPMI (68 aa)) is disordered. Residues 52–63 (RSSSISNTNRTG) are compositionally biased toward polar residues. Catalysis depends on residues Cys156, His211, and Gln231.

It belongs to the Cif family.

Its subcellular location is the secreted. The protein resides in the host nucleus. The enzyme catalyses L-glutaminyl-[protein] + H2O = L-glutamyl-[protein] + NH4(+). In terms of biological role, protein-glutamine deamidase effector that inhibits the host cell cycle and other key cellular processes such as the actin network and programmed-cell death. Acts by mediating the side chain deamidation of 'Gln-40' of host NEDD8, converting it to glutamate, thereby abolishing the activity of cullin-RING-based E3 ubiquitin-protein ligase complexes (CRL complexes). Inactivation of CRL complexes prevents ubiquitination and subsequent degradation of the cyclin-dependent kinase inhibitors CDKN1A/p21 and CDKN1B/p27, leading to G1 and G2 cell cycle arrests in host cells. Deamidation of 'Gln-40' of host NEDD8 also triggers macrophage-specific programmed cell death. Also able to catalyze deamidation of 'Gln-40' of host ubiquitin in vitro; however, NEDD8 constitutes the preferred substrate in vivo. Also regulates the host NF-kappa-B signaling via activation of MAPK/ERK cascade: activation of host MAPK/ERK cascade is independent of CRL complexes inhibition, suggesting that Cif has other host protein targets than NEDD8. The chain is Protein-glutamine deamidase Cif from Burkholderia pseudomallei (strain K96243).